A 440-amino-acid chain; its full sequence is Chromosome partition protein MukF (440 aa).

Residues 208–236 (LDETSGNLRELQDTLNAAGDKLQSQLLRI) are leucine-zipper.

It belongs to the MukF family. As to quaternary structure, interacts, and probably forms a ternary complex, with MukE and MukB via its C-terminal region. The complex formation is stimulated by calcium or magnesium. It is required for an interaction between MukE and MukB.

The protein localises to the cytoplasm. The protein resides in the nucleoid. Its function is as follows. Involved in chromosome condensation, segregation and cell cycle progression. May participate in facilitating chromosome segregation by condensation DNA from both sides of a centrally located replisome during cell division. Not required for mini-F plasmid partitioning. Probably acts via its interaction with MukB and MukE. Overexpression results in anucleate cells. It has a calcium binding activity. The protein is Chromosome partition protein MukF of Histophilus somni (strain 129Pt) (Haemophilus somnus).